We begin with the raw amino-acid sequence, 77 residues long: Translational regulator CsrA (77 aa).

It belongs to the CsrA/RsmA family. In terms of assembly, homodimer; the beta-strands of each monomer intercalate to form a hydrophobic core, while the alpha-helices form wings that extend away from the core.

Its subcellular location is the cytoplasm. Functionally, a translational regulator that binds mRNA to regulate translation initiation and/or mRNA stability. Usually binds in the 5'-UTR at or near the Shine-Dalgarno sequence preventing ribosome-binding, thus repressing translation. Its main target seems to be the major flagellin gene, while its function is anatagonized by FliW. The chain is Translational regulator CsrA from Desulfitobacterium hafniense (strain Y51).